Here is a 401-residue protein sequence, read N- to C-terminus: Subtilisin-like protease 10 (401 aa).

A signal peptide spans 1–19 (MLFLKAVIAILSVLPAADA). Residues 20 to 116 (AAILNFENKQ…IEPDRMASAQ (97 aa)) constitute a propeptide that is removed on maturation. Residues 35–112 (SYIVVLKNDI…QVDYIEPDRM (78 aa)) enclose the Inhibitor I9 domain. The Peptidase S8 domain occupies 126-401 (SWGLGRISHQ…NRLLYNGSGQ (276 aa)). Active-site charge relay system residues include Asp-158 and His-189. An N-linked (GlcNAc...) asparagine glycan is attached at Asn-250. Ser-347 acts as the Charge relay system in catalysis. N-linked (GlcNAc...) asparagine glycosylation is present at Asn-397.

It belongs to the peptidase S8 family.

The protein resides in the secreted. Functionally, secreted subtilisin-like serine protease with keratinolytic activity that contributes to pathogenicity. In Arthroderma otae (strain ATCC MYA-4605 / CBS 113480) (Microsporum canis), this protein is Subtilisin-like protease 10 (SUB10).